Consider the following 216-residue polypeptide: Redox-sensing transcriptional repressor Rex (216 aa).

The segment at residues 20-59 is a DNA-binding region (H-T-H motif); sequence QYYRLFKSLVEENVTRTNSQLISEKIGVDAATIRRDFSLF. NAD(+) is bound at residue 94 to 99; the sequence is GVGNLG.

Belongs to the transcriptional regulatory Rex family. Homodimer.

Its subcellular location is the cytoplasm. Functionally, modulates transcription in response to changes in cellular NADH/NAD(+) redox state. In Lactococcus lactis subsp. cremoris (strain SK11), this protein is Redox-sensing transcriptional repressor Rex.